A 232-amino-acid chain; its full sequence is Eukaryotic translation initiation factor NCBP (232 aa).

The segment covering 1-11 has biased composition (basic and acidic residues); it reads MEPAVERKVPE. Residues 1-49 are disordered; it reads MEPAVERKVPEQEEQLQPSHARAEDAPPAAVEEEDEAEAEESERRNREL. Residues 31–41 are compositionally biased toward acidic residues; it reads VEEEDEAEAEE.

The protein belongs to the eukaryotic initiation factor 4E family. In terms of assembly, EIF4F is a multi-subunit complex, the composition of which varies with external and internal environmental conditions. It is composed of at least EIF4A, EIF4E and EIF4G. EIF4E is also known to interact with other partners. In higher plants two isoforms of EIF4F have been identified, named isoform EIF4F and isoform EIF(iso)4F. Isoform EIF4F has subunits p220 and p26, whereas isoform EIF(iso)4F has subunits p82 and p28.

Its function is as follows. Recognizes and binds the 7-methylguanosine-containing mRNA cap during an early step in the initiation of protein synthesis and facilitates ribosome binding by inducing the unwinding of the mRNAs secondary structures. The chain is Eukaryotic translation initiation factor NCBP (NCBP) from Triticum aestivum (Wheat).